We begin with the raw amino-acid sequence, 221 residues long: DNA repair and recombination protein RadB (221 aa).

The protein belongs to the eukaryotic RecA-like protein family. RadB subfamily.

In terms of biological role, involved in DNA repair and in homologous recombination. May regulate the cleavage reactions of the branch-structured DNA. Has a very weak ATPase activity that is not stimulated by DNA. Binds DNA but does not promote DNA strands exchange. This chain is DNA repair and recombination protein RadB, found in Thermococcus gammatolerans (strain DSM 15229 / JCM 11827 / EJ3).